Here is a 532-residue protein sequence, read N- to C-terminus: Flavin-containing monooxygenase 3 (532 aa).

FAD is bound by residues 9–13 (GAGVS), Glu-32, 40–41 (LW), and 61–62 (NS). NADP(+)-binding positions include 60-61 (TN) and 195-198 (SGCD). Ser-401 is subject to Phosphoserine. Residues 512-532 (CHLVKLFVLPVLFIAVFLALI) form a helical membrane-spanning segment.

The protein belongs to the FMO family. FAD serves as cofactor.

It is found in the microsome membrane. The protein localises to the endoplasmic reticulum membrane. It carries out the reaction trimethylamine + NADPH + O2 = trimethylamine N-oxide + NADP(+) + H2O. The enzyme catalyses N,N-dimethylaniline + NADPH + O2 + H(+) = N,N-dimethylaniline N-oxide + NADP(+) + H2O. The catalysed reaction is hypotaurine + NADPH + O2 + H(+) = taurine + NADP(+) + H2O. It catalyses the reaction (S)-nicotine + NADPH + O2 = trans-(S)-nicotine N(1')-oxide + NADP(+) + H2O. It carries out the reaction albendazole + NADPH + O2 + H(+) = albendazole S-oxide + NADP(+) + H2O. Functionally, essential hepatic enzyme that catalyzes the oxygenation of a wide variety of nitrogen- and sulfur-containing compounds including drugs as well as dietary compounds. Plays an important role in the metabolism of trimethylamine (TMA), via the production of trimethylamine N-oxide (TMAO) metabolite. TMA is generated by the action of gut microbiota using dietary precursors such as choline, choline containing compounds, betaine or L-carnitine. By regulating TMAO concentration, FMO3 directly impacts both platelet responsiveness and rate of thrombus formation. This Canis lupus familiaris (Dog) protein is Flavin-containing monooxygenase 3 (FMO3).